We begin with the raw amino-acid sequence, 160 residues long: MDIDSLMGFDPLLRNLHYILEATDDNTTGNKSNNSGPSRAYVRDARAMAATPADVKECPNSYVFIVDMPGLKSGDIKVQVERDNVLVISGKRNREEEKEGVKYVRMERRMGKFMKKFALPEDANTDKISAICQDGVLTVTVEKLPPPEPKKPKTIQVQVA.

The sHSP domain maps to 44 to 160; it reads DARAMAATPA…KPKTIQVQVA (117 aa).

The protein belongs to the small heat shock protein (HSP20) family.

It is found in the cytoplasm. The chain is 17.9 kDa class II heat shock protein (HSP17.9) from Helianthus annuus (Common sunflower).